The primary structure comprises 209 residues: Superoxide dismutase [Mn/Fe] (209 aa).

The Fe(3+) site is built by H38, H90, D172, and H176. Mn(2+)-binding residues include H38, H90, D172, and H176.

This sequence belongs to the iron/manganese superoxide dismutase family. Requires Mn(2+) as cofactor. Fe(3+) serves as cofactor.

It catalyses the reaction 2 superoxide + 2 H(+) = H2O2 + O2. Destroys superoxide anion radicals which are normally produced within the cells and which are toxic to biological systems. Catalyzes the dismutation of superoxide anion radicals into O2 and H2O2 by successive reduction and oxidation of the transition metal ion at the active site. The protein is Superoxide dismutase [Mn/Fe] (sodB) of Rickettsia conorii (strain ATCC VR-613 / Malish 7).